Consider the following 45-residue polypeptide: Putative metallothionein-like protein 1B (45 aa).

This sequence belongs to the metallothionein superfamily. Type 15 family.

Functionally, metallothioneins have a high content of cysteine residues that bind various heavy metals. Confers tolerance to cadmium (Cd) and plays a role in Cd and zinc (Zn) homeostasis. This chain is Putative metallothionein-like protein 1B (MT1B), found in Arabidopsis thaliana (Mouse-ear cress).